The chain runs to 574 residues: Interactor of HORMAD1 protein 1 (574 aa).

The tract at residues 113 to 133 (GLSKQFEEKKRRATDQSDSET) is disordered. A compositionally biased stretch (basic and acidic residues) spans 117-127 (QFEEKKRRATD). Residues 217–240 (MEMKSTLKNLEVLVVEQTKNLQQF) adopt a coiled-coil conformation. Disordered stretches follow at residues 267-324 (GHLK…GVWD), 372-393 (FSNL…GASQ), and 426-457 (TEQK…DRKQ). Residues 272 to 284 (STSQTSPSLTQSL) are compositionally biased toward low complexity. The segment covering 372-381 (FSNLPSQRAG) has biased composition (polar residues). Positions 431–449 (RPCRKRRRGKKQQPQRSKR) are enriched in basic residues. Ser-476, Ser-569, and Ser-570 each carry phosphoserine.

As to quaternary structure, part of the MCD recombinosome complex, at least composed of IHO1, REC114 and MEI4. Interacts with REC114. Interacts with MEI4. Interacts with HORMAD1. Interacts with ANKRD31. Detected in spermatocytes and testis (at protein level).

Its subcellular location is the chromosome. In terms of biological role, required for DNA double-strand breaks (DSBs) formation in unsynapsed regions during meiotic recombination. Probably acts by forming a complex with MEI4 and REC114, which activates DSBs formation in unsynapsed regions, an essential step to ensure completion of synapsis. Not required for HORMAD1 functions in pairing-independent synaptonemal complex formation, ATR recruitment to unsynapsed axes, meiotic silencing of unsynapsed chromatin (MSUC) or meiotic surveillance. This Mus musculus (Mouse) protein is Interactor of HORMAD1 protein 1.